We begin with the raw amino-acid sequence, 3072 residues long: Eukaryotic translation initiation factor 2-alpha kinase PK4 (3072 aa).

Topologically, residues 1–106 (MCNFIKKGIR…EFRWLINKLE (106 aa)) are cytoplasmic. The chain crosses the membrane as a helical span at residues 107–127 (IIYFYFFCHLLLLCIFQNIFL). Residues 128–1643 (LTYMSKEYFL…FTSIRYKRRR (1516 aa)) lie on the Lumenal side of the membrane. Positions 383–402 (KEKCHRDEKCDRGENYDRGE) are disordered. The tract at residues 576–610 (KKKILDENDMITIDNNIDKKENILFPYFHMEILKD) is 10 X 7 AA tandem repeat of D-K-N-[GE]-L-D-[GD]. The tract at residues 970-1010 (QYEDNNDNDNNKNDNNKNDNNKNDNNKNDNNNNNNNNNNNS) is disordered. Residues 978–996 (DNNKNDNNKNDNNKNDNNK) show a composition bias toward basic and acidic residues. The segment covering 997–1009 (NDNNNNNNNNNNN) has biased composition (low complexity). The chain crosses the membrane as a helical span at residues 1644–1664 (WYWRVFYTIMFIIFFPVLFIY). Topologically, residues 1665-3072 (RRIIKRRKGS…IKNENNGADK (1408 aa)) are cytoplasmic. Disordered regions lie at residues 1737-1766 (KNYN…SKSN) and 1917-1937 (KVGS…KDKK). The segment covering 1738-1766 (NYNNNNNNNNNKNNNNISNNNSNSNSKSN) has biased composition (low complexity). Over residues 1928–1937 (NYTDNEKDKK) the composition is skewed to basic and acidic residues. Residues 2152–2160 (IGQGGFGSV) and Lys2177 each bind ATP. Disordered regions lie at residues 2316-2402 (FYSD…EGRD), 2479-2558 (RNED…KKLD), and 2691-2749 (ENDD…DDDI). Over residues 2326 to 2335 (KNKENPEKNH) the composition is skewed to basic and acidic residues. Residues 2362–2384 (HKLKKRKNKKKKSKKKRKSKSKI) show a composition bias toward basic residues. 10 tandem repeats follow at residues 2483 to 2489 (DKNGLDG), 2490 to 2496 (DKNGLDG), 2497 to 2503 (DKNGLDG), 2504 to 2510 (DKNGLDG), 2511 to 2517 (DKNGLDG), 2518 to 2524 (DKNELDG), 2525 to 2531 (DKNGLDG), 2532 to 2538 (DKNGLDG), 2539 to 2545 (DKNGLDG), and 2546 to 2552 (DKNELDD). The Protein kinase domain maps to 2627–2998 (TNVESINTNG…KIKVLLDPHL (372 aa)). The span at 2692–2702 (NDDDDDDDDDN) shows a compositional bias: acidic residues. The Proton acceptor role is filled by Asp2835. Thr2902 carries the post-translational modification Phosphothreonine.

It belongs to the protein kinase superfamily. Ser/Thr protein kinase family. GCN2 subfamily. May form oligomers in response to stress; oligomerization may result in catalytic activity. Interacts with BIP; the interaction is disrupted in response to stress. In terms of processing, auto-phosphorylated.

It is found in the endoplasmic reticulum membrane. The enzyme catalyses L-seryl-[protein] + ATP = O-phospho-L-seryl-[protein] + ADP + H(+). The catalysed reaction is L-threonyl-[protein] + ATP = O-phospho-L-threonyl-[protein] + ADP + H(+). Its activity is regulated as follows. Dissociation from BIP and oligomerization, may results autophosphorylation and kinase activity induction. Its function is as follows. During the asexual blood stage, phosphorylates translation factor eIF2alpha in late schizonts resulting in protein translation inhibition. Plays a role in trophozoite differentiation into schizonts. This chain is Eukaryotic translation initiation factor 2-alpha kinase PK4, found in Plasmodium falciparum (isolate 3D7).